The chain runs to 295 residues: Keratin-like protein KRT222 (295 aa).

The IF rod domain maps to 1–150 (MELSQLLNEI…HLLEKEEIRY (150 aa)). Residues 2 to 150 (ELSQLLNEIR…HLLEKEEIRY (149 aa)) are a coiled coil.

Belongs to the intermediate filament family.

The polypeptide is Keratin-like protein KRT222 (KRT222) (Homo sapiens (Human)).